A 309-amino-acid polypeptide reads, in one-letter code: Probable lipid kinase YegS-like (309 aa).

One can recognise a DAGKc domain in the interval 1 to 133; the sequence is MPLTHIRLLL…IDIIRANNNY (133 aa). ATP contacts are provided by residues serine 39, 65-71, and threonine 95; that span reads GDGSLNE. Residues leucine 214, aspartate 217, and leucine 219 each contribute to the Mg(2+) site. The active-site Proton acceptor is glutamate 273.

Belongs to the diacylglycerol/lipid kinase family. YegS lipid kinase subfamily. Requires Mg(2+) as cofactor. Ca(2+) serves as cofactor.

It localises to the cytoplasm. Its function is as follows. Probably phosphorylates lipids; the in vivo substrate is unknown. The protein is Probable lipid kinase YegS-like of Shewanella frigidimarina (strain NCIMB 400).